The following is a 271-amino-acid chain: Ribosomal RNA small subunit methyltransferase A (271 aa).

Positions 18, 20, 45, 66, 91, and 112 each coordinate S-adenosyl-L-methionine.

The protein belongs to the class I-like SAM-binding methyltransferase superfamily. rRNA adenine N(6)-methyltransferase family. RsmA subfamily.

Its subcellular location is the cytoplasm. The catalysed reaction is adenosine(1518)/adenosine(1519) in 16S rRNA + 4 S-adenosyl-L-methionine = N(6)-dimethyladenosine(1518)/N(6)-dimethyladenosine(1519) in 16S rRNA + 4 S-adenosyl-L-homocysteine + 4 H(+). Specifically dimethylates two adjacent adenosines (A1518 and A1519) in the loop of a conserved hairpin near the 3'-end of 16S rRNA in the 30S particle. May play a critical role in biogenesis of 30S subunits. The polypeptide is Ribosomal RNA small subunit methyltransferase A (Vibrio atlanticus (strain LGP32) (Vibrio splendidus (strain Mel32))).